A 373-amino-acid polypeptide reads, in one-letter code: tRNA (guanine(26)-N(2))-dimethyltransferase (373 aa).

The region spanning 2 to 365 (KIISEGETKL…AELSDLVVLI (364 aa)) is the Trm1 methyltransferase domain. 5 residues coordinate S-adenosyl-L-methionine: arginine 35, arginine 66, aspartate 86, aspartate 113, and alanine 114.

This sequence belongs to the class I-like SAM-binding methyltransferase superfamily. Trm1 family.

The enzyme catalyses guanosine(26) in tRNA + 2 S-adenosyl-L-methionine = N(2)-dimethylguanosine(26) in tRNA + 2 S-adenosyl-L-homocysteine + 2 H(+). Its function is as follows. Dimethylates a single guanine residue at position 26 of a number of tRNAs using S-adenosyl-L-methionine as donor of the methyl groups. This is tRNA (guanine(26)-N(2))-dimethyltransferase from Methanococcus maripaludis (Methanococcus deltae).